The following is a 471-amino-acid chain: Cysteine--tRNA ligase (471 aa).

Residue Cys-30 participates in Zn(2+) binding. Positions 32–42 (PTVYNFAHIGN) match the 'HIGH' region motif. 3 residues coordinate Zn(2+): Cys-212, His-237, and Glu-241. Positions 270 to 274 (KMSKS) match the 'KMSKS' region motif. An ATP-binding site is contributed by Lys-273.

It belongs to the class-I aminoacyl-tRNA synthetase family. Monomer. Zn(2+) serves as cofactor.

The protein resides in the cytoplasm. It catalyses the reaction tRNA(Cys) + L-cysteine + ATP = L-cysteinyl-tRNA(Cys) + AMP + diphosphate. In Leptospira interrogans serogroup Icterohaemorrhagiae serovar Lai (strain 56601), this protein is Cysteine--tRNA ligase.